Consider the following 497-residue polypeptide: Bloodstream-specific protein 2 (497 aa).

Residues 1–14 form the signal peptide; the sequence is MRAIFLVALALATM. Residues 15-124 form the Thioredoxin 1 domain; sequence RESTAESLKL…IIKYIKANVG (110 aa). N30 is a glycosylation site (N-linked (GlcNAc...) asparagine). An intrachain disulfide couples C48 to C51. N-linked (GlcNAc...) asparagine glycosylation is found at N63, N85, N153, N154, N250, and N278. The 122-residue stretch at 334-455 folds into the Thioredoxin 2 domain; that stretch reads EPTIKSLPVP…VYEFVRKHVT (122 aa). Active-site nucleophile residues include C378 and C381. Cysteines 378 and 381 form a disulfide. 6 N-linked (GlcNAc...) asparagine glycosylation sites follow: N413, N465, N476, N482, N485, and N488. Residues 461–497 are disordered; the sequence is EKPANVTEEKKSEEENKSSKSNESNDSNESNVDKQDL. Basic and acidic residues predominate over residues 467–480; the sequence is TEEKKSEEENKSSK. Residues 481–490 are compositionally biased toward low complexity; it reads SNESNDSNES.

The protein belongs to the protein disulfide isomerase family.

This is Bloodstream-specific protein 2 (BS2) from Trypanosoma brucei brucei.